Consider the following 427-residue polypeptide: Enolase (427 aa).

A (2R)-2-phosphoglycerate-binding site is contributed by Gln163. Glu205 (proton donor) is an active-site residue. Residues Asp242, Glu285, and Asp312 each coordinate Mg(2+). 4 residues coordinate (2R)-2-phosphoglycerate: Lys337, Arg366, Ser367, and Lys388. Lys337 acts as the Proton acceptor in catalysis.

This sequence belongs to the enolase family. Requires Mg(2+) as cofactor.

The protein localises to the cytoplasm. Its subcellular location is the secreted. The protein resides in the cell surface. The catalysed reaction is (2R)-2-phosphoglycerate = phosphoenolpyruvate + H2O. Its pathway is carbohydrate degradation; glycolysis; pyruvate from D-glyceraldehyde 3-phosphate: step 4/5. Its function is as follows. Catalyzes the reversible conversion of 2-phosphoglycerate (2-PG) into phosphoenolpyruvate (PEP). It is essential for the degradation of carbohydrates via glycolysis. This Burkholderia mallei (strain NCTC 10247) protein is Enolase.